A 305-amino-acid chain; its full sequence is MCGIFGYCNFLIEKTRGEIIDTLIEGLQALEYKEYDSSGISIQGDELKSLNIYKQTGKISSLKEEIDLYNLNKNLPFISHCGITHTRRATHGGLRRANCHPHNSDPSNEFVVVHNGVITNFANLKALLVAKGYVFKSDTDTECIPKLYKHIYDTSIELGYNLDFHVLTNLVLKELEGSYGLLCTSSHFPDEVVAARKGSPLVIGVKGKTDMDVNFVEVEYLDQEEDYLKLNTQTKSSGNVLAAAPVKYNTCLRKSPPPSFTIPEKLYNFYIQSWLIHRNASRERLAATHGILFVIRLCITSAVCE.

Cys-2 acts as the Nucleophile; for GATase activity in catalysis. Residues Cys-2–Glu-305 form the Glutamine amidotransferase type-2 domain.

It catalyses the reaction D-fructose 6-phosphate + L-glutamine = D-glucosamine 6-phosphate + L-glutamate. It functions in the pathway nucleotide-sugar biosynthesis; UDP-N-acetyl-alpha-D-glucosamine biosynthesis; alpha-D-glucosamine 6-phosphate from D-fructose 6-phosphate: step 1/1. Functionally, involved in amino sugar synthesis (formation of chitin, supplies the amino sugars of asparagine-linked oligosaccharides of glycoproteins). This is Putative glutamine--fructose-6-phosphate aminotransferase [isomerizing] from Saccharomyces cerevisiae (strain Lalvin EC1118 / Prise de mousse) (Baker's yeast).